The sequence spans 668 residues: MVKKGSWFSAIKRVFTPHSKEKLANEPERKSGKEKKKKGFGKLRHGETNSFLPIFREPSSIEKILGEAERDHNLVFRPPTPDRPNPYSASPPPRPASPRVASPRPTSPRVASPRVPSPRAEVPRTLSPKPPSPRAEVPRSLSPKPPSPRADLPRSLSPKPFDRSKPSSASANAPPTLRPASTRVPSQRITPHSVPSPRPSSPRGASPQAISSKPPSPRAEPPTLDTPRPPSPRAASLRADPPRLDAARPTTPRPPSPLADAPRLDAPRPTTPKPPSPRSDPPRLDAPRPTTPKPPSPRSVSPRAVQRREIVYRPEPTLPVQHASATKIQGAFRGYMARKSFRALKGLVRLQGVVRGYSVKRQTINAMKYMQQVVRVQSQIQSRRIKMLENQAQVEKDEAKWAASEAGNDNWDDSVLTKEERDSRSQRKTDAIIKRERSMAYAYSRKLWKNSPKSTQDNRSFPQWWNWVDRQNPLASPAPSYSQPQRDFRLTPSRLCPSPLSQSSKQHHIRLDNHFDTSTPRSSRSTFHTPSRPIHTGTSRYSRGRLRGQDSPFKDDDSLTSCPPFPSYMAPTVSAKAKVRPNSNPKERVMGTPVSEKRRMSYPPTQDTFRWNKGSLVMSNSSSHRGPGSPGGVVLEKHKTLKSVGNLSIGSTASMATTVGRKEFNRFV.

Positions 1–11 (MVKKGSWFSAI) are calmodulin-binding. 2 disordered regions span residues 16 to 54 (TPHS…FLPI) and 66 to 305 (GEAE…PRAV). Residues 18 to 31 (HSKEKLANEPERKS) show a composition bias toward basic and acidic residues. Residues 32 to 43 (GKEKKKKGFGKL) are compositionally biased toward basic residues. Over residues 78-96 (PPTPDRPNPYSASPPPRPA) the composition is skewed to pro residues. Composition is skewed to low complexity over residues 97–120 (SPRV…SPRA) and 166–175 (PSSASANAPP). The span at 269 to 279 (PTTPKPPSPRS) shows a compositional bias: pro residues. IQ domains follow at residues 321 to 350 (QHAS…LVRL) and 343 to 372 (ALKG…YMQQ). 2 disordered regions span residues 399 to 431 (AKWA…KTDA) and 476 to 561 (SPAP…SLTS). Residues 415 to 431 (VLTKEERDSRSQRKTDA) are compositionally biased toward basic and acidic residues. Residues 516-529 (DTSTPRSSRSTFHT) are compositionally biased toward polar residues.

This sequence belongs to the IQD family. As to quaternary structure, binds to multiple calmodulin (CaM) in the presence of Ca(2+) and CaM-like proteins. Expressed in hypocotyls, cotyledons, leaves and petioles.

It is found in the cell membrane. The protein resides in the cytoplasm. Its subcellular location is the cytoskeleton. Functionally, may be involved in cooperative interactions with calmodulins or calmodulin-like proteins. Recruits calmodulin proteins to microtubules, thus being a potential scaffold in cellular signaling and trafficking. Regulates cell and organ shapes (prevents twisting) in aerial parts probably by regulating transverse microtubules (MT) arrays alignment. Regulates the formation of oval xylem secondary cell-wall deposition pits through microtubule-dependent lateral inhibition of Rho GTPase domains, thus confining the area of active ROP domains within the lattice of the cortical microtubules. May associate with nucleic acids and regulate gene expression at the transcriptional or post-transcriptional level. This chain is Protein IQ-DOMAIN 14, found in Arabidopsis thaliana (Mouse-ear cress).